We begin with the raw amino-acid sequence, 388 residues long: Succinate--CoA ligase [ADP-forming] subunit beta (388 aa).

In terms of domain architecture, ATP-grasp spans 9-244; sequence KQIFAKYKLP…PSQDDPREAL (236 aa). Residues Lys-46, 53–55, Glu-99, Ala-102, and Glu-107 each bind ATP; that span reads GRG. Positions 199 and 213 each coordinate Mg(2+). Residues Asn-264 and 321–323 contribute to the substrate site; that span reads GIV.

Belongs to the succinate/malate CoA ligase beta subunit family. As to quaternary structure, heterotetramer of two alpha and two beta subunits. Requires Mg(2+) as cofactor.

It carries out the reaction succinate + ATP + CoA = succinyl-CoA + ADP + phosphate. It catalyses the reaction GTP + succinate + CoA = succinyl-CoA + GDP + phosphate. Its pathway is carbohydrate metabolism; tricarboxylic acid cycle; succinate from succinyl-CoA (ligase route): step 1/1. Succinyl-CoA synthetase functions in the citric acid cycle (TCA), coupling the hydrolysis of succinyl-CoA to the synthesis of either ATP or GTP and thus represents the only step of substrate-level phosphorylation in the TCA. The beta subunit provides nucleotide specificity of the enzyme and binds the substrate succinate, while the binding sites for coenzyme A and phosphate are found in the alpha subunit. The protein is Succinate--CoA ligase [ADP-forming] subunit beta of Glaesserella parasuis serovar 5 (strain SH0165) (Haemophilus parasuis).